Reading from the N-terminus, the 320-residue chain is Sucrose operon repressor (320 aa).

Residues 1–57 (MVAKLTDVAKLAGVSPTTVSRVINRKGYLSEKTITKVQAAMKTLGYKPNNLARSLQG) enclose the HTH lacI-type domain. Positions 5–24 (LTDVAKLAGVSPTTVSRVIN) form a DNA-binding region, H-T-H motif.

Negative regulator of scrB expression. The chain is Sucrose operon repressor (scrR) from Streptococcus mutans serotype c (strain ATCC 700610 / UA159).